We begin with the raw amino-acid sequence, 280 residues long: 2,3,4,5-tetrahydropyridine-2,6-dicarboxylate N-succinyltransferase (280 aa).

R109 and D146 together coordinate substrate.

The protein belongs to the transferase hexapeptide repeat family. As to quaternary structure, homotrimer.

It is found in the cytoplasm. The catalysed reaction is (S)-2,3,4,5-tetrahydrodipicolinate + succinyl-CoA + H2O = (S)-2-succinylamino-6-oxoheptanedioate + CoA. It participates in amino-acid biosynthesis; L-lysine biosynthesis via DAP pathway; LL-2,6-diaminopimelate from (S)-tetrahydrodipicolinate (succinylase route): step 1/3. The sequence is that of 2,3,4,5-tetrahydropyridine-2,6-dicarboxylate N-succinyltransferase from Blochmanniella floridana.